Here is a 743-residue protein sequence, read N- to C-terminus: Phosphoribosylformylglycinamidine synthase subunit PurL (743 aa).

The active site involves His53. Residues Tyr56 and Lys95 each coordinate ATP. Glu97 serves as a coordination point for Mg(2+). Substrate contacts are provided by residues 98 to 101 (SHNH) and Arg120. The active-site Proton acceptor is His99. Residue Asp121 coordinates Mg(2+). Residue Gln245 participates in substrate binding. Asp275 serves as a coordination point for Mg(2+). Residue 319 to 321 (ESQ) participates in substrate binding. Residues Asp502 and Gly539 each contribute to the ATP site. Asn540 contributes to the Mg(2+) binding site. A substrate-binding site is contributed by Ser542.

It belongs to the FGAMS family. As to quaternary structure, monomer. Part of the FGAM synthase complex composed of 1 PurL, 1 PurQ and 2 PurS subunits.

It localises to the cytoplasm. It carries out the reaction N(2)-formyl-N(1)-(5-phospho-beta-D-ribosyl)glycinamide + L-glutamine + ATP + H2O = 2-formamido-N(1)-(5-O-phospho-beta-D-ribosyl)acetamidine + L-glutamate + ADP + phosphate + H(+). It functions in the pathway purine metabolism; IMP biosynthesis via de novo pathway; 5-amino-1-(5-phospho-D-ribosyl)imidazole from N(2)-formyl-N(1)-(5-phospho-D-ribosyl)glycinamide: step 1/2. Part of the phosphoribosylformylglycinamidine synthase complex involved in the purines biosynthetic pathway. Catalyzes the ATP-dependent conversion of formylglycinamide ribonucleotide (FGAR) and glutamine to yield formylglycinamidine ribonucleotide (FGAM) and glutamate. The FGAM synthase complex is composed of three subunits. PurQ produces an ammonia molecule by converting glutamine to glutamate. PurL transfers the ammonia molecule to FGAR to form FGAM in an ATP-dependent manner. PurS interacts with PurQ and PurL and is thought to assist in the transfer of the ammonia molecule from PurQ to PurL. This is Phosphoribosylformylglycinamidine synthase subunit PurL from Lactobacillus helveticus (strain DPC 4571).